The sequence spans 90 residues: Small ribosomal subunit protein bS16 (90 aa).

It belongs to the bacterial ribosomal protein bS16 family.

This is Small ribosomal subunit protein bS16 from Streptococcus thermophilus (strain CNRZ 1066).